Reading from the N-terminus, the 305-residue chain is Aspartate carbamoyltransferase catalytic subunit (305 aa).

The carbamoyl phosphate site is built by R60 and T61. Residue K88 coordinates L-aspartate. 3 residues coordinate carbamoyl phosphate: R110, H138, and Q141. R171 and R222 together coordinate L-aspartate. Carbamoyl phosphate contacts are provided by A263 and P264.

The protein belongs to the aspartate/ornithine carbamoyltransferase superfamily. ATCase family. As to quaternary structure, heterododecamer (2C3:3R2) of six catalytic PyrB chains organized as two trimers (C3), and six regulatory PyrI chains organized as three dimers (R2).

It catalyses the reaction carbamoyl phosphate + L-aspartate = N-carbamoyl-L-aspartate + phosphate + H(+). It participates in pyrimidine metabolism; UMP biosynthesis via de novo pathway; (S)-dihydroorotate from bicarbonate: step 2/3. In terms of biological role, catalyzes the condensation of carbamoyl phosphate and aspartate to form carbamoyl aspartate and inorganic phosphate, the committed step in the de novo pyrimidine nucleotide biosynthesis pathway. The polypeptide is Aspartate carbamoyltransferase catalytic subunit (Halalkalibacterium halodurans (strain ATCC BAA-125 / DSM 18197 / FERM 7344 / JCM 9153 / C-125) (Bacillus halodurans)).